A 143-amino-acid polypeptide reads, in one-letter code: Oxoglutarate dehydrogenase inhibitor (143 aa).

Thr-14 is modified (phosphothreonine). In terms of domain architecture, FHA spans 68 to 117 (TTAGRHPESDIFLDDVTVSRRHAEFRINEGEFEVVDVGSLNGTYVNREPR).

The protein resides in the cytoplasm. In terms of biological role, an essential component of the PknG signaling pathway. When unphosphorylated, it inhibits the activity of 2-oxoglutarate dehydrogenase. When phosphorylated it does not inhibit 2-oxoglutarate dehydrogenase. The polypeptide is Oxoglutarate dehydrogenase inhibitor (odhI) (Corynebacterium glutamicum (strain ATCC 13032 / DSM 20300 / JCM 1318 / BCRC 11384 / CCUG 27702 / LMG 3730 / NBRC 12168 / NCIMB 10025 / NRRL B-2784 / 534)).